A 145-amino-acid polypeptide reads, in one-letter code: MASHRLFLLCLAGLVFMSEAGPTGQSKCPLMVKVLDAVRGSPAVNVAVKVFKKAADETWEPFASGKTSESGELHGLTTDEKFVEGVYKVELDTKSYWKTLGISPFHEYVEVVFTANDSGQRRYTIAALLSPYSYSTTALVSDPKE.

A signal peptide spans 1-20 (MASHRLFLLCLAGLVFMSEA). The residue at position 28 (Cys-28) is a Sulfocysteine. Lys-33 serves as a coordination point for L-thyroxine. Glu-60 carries the post-translational modification 4-carboxyglutamate. Phosphoserine is present on Ser-70. An L-thyroxine-binding site is contributed by Glu-72. N-linked (GlcNAc...) asparagine glycosylation occurs at Asn-116. Residue Ser-135 participates in L-thyroxine binding.

The protein belongs to the transthyretin family. Homotetramer. Dimer of dimers. In the homotetramer, subunits assemble around a central channel that can accommodate two ligand molecules. Interacts with RBP4. Sulfonation of the reactive cysteine Cys-28 enhances the stability of the native conformation of TTR, avoiding misassembly of the protein leading to amyloid formation.

Its subcellular location is the secreted. In terms of biological role, thyroid hormone-binding protein. Probably transports thyroxine from the bloodstream to the brain. The chain is Transthyretin (TTR) from Erinaceus europaeus (Western European hedgehog).